The primary structure comprises 677 residues: Secretogranin-1 (677 aa).

An N-terminal signal peptide occupies residues 1 to 20 (MQPTLLLSLLGAVGLAAVNS). Cys-36 and Cys-57 form a disulfide bridge. Basic and acidic residues-rich tracts occupy residues 64-100 (SRKD…ESSS) and 118-136 (ADTE…RADE). The segment at 64–463 (SRKDVKDKET…DKARRHPQGA (400 aa)) is disordered. Thr-79 is subject to Phosphothreonine. Phosphoserine occurs at positions 93, 99, and 100. Ser-93 carries an O-linked (Xyl...) (chondroitin sulfate) serine glycan. The O-glycosylated at one site stretch occupies residues 116-120 (TKADT). Residue Ser-130 is modified to Phosphoserine; by FAM20C. Ser-149 carries the phosphoserine modification. Basic and acidic residues-rich tracts occupy residues 150–162 (EEVK…KSQR), 172–190 (NYQK…HLEE), and 200–236 (NERK…EKSS). Residue Ser-183 is modified to Phosphoserine. Ser-225 carries the phosphoserine; by FAM20C modification. An O-linked (Xyl...) (chondroitin sulfate) serine glycan is attached at Ser-239. Ser-259 and Ser-263 each carry phosphoserine. Over residues 262-272 (ESEEGEEDATS) the composition is skewed to acidic residues. Residues 277 to 287 (RRTRPRHHHGR) show a composition bias toward basic residues. Phosphoserine is present on residues Ser-293, Ser-294, Ser-311, and Ser-335. Residue Tyr-341 is modified to Sulfotyrosine. A compositionally biased stretch (basic and acidic residues) spans 359–372 (WERYRGRGSEEYRA). Ser-367, Ser-377, and Ser-380 each carry phosphoserine; by FAM20C. 2 stretches are compositionally biased toward basic and acidic residues: residues 384 to 415 (EDKR…EPGK) and 433 to 455 (DTRE…QMDK). The residue at position 401 (Tyr-401) is a Phosphotyrosine. Ser-405 is modified (phosphoserine). Tyr-474 is modified (sulfotyrosine). Positions 475 to 512 (GEEGAPGKWQQQGDLQDTKENREEARFQDKQYSSHHTA) are disordered. Residues 490–503 (QDTKENREEARFQD) are compositionally biased toward basic and acidic residues. 2 positions are modified to phosphoserine: Ser-533 and Ser-534. Tyr-566 bears the Sulfotyrosine mark. Position 617 is a phosphoserine (Ser-617). Positions 622-653 (DFYDSEEPVSTHQEAENEKDRADQTVLTEDEK) are disordered. Tyr-624 is modified (sulfotyrosine). Ser-626 and Ser-631 each carry phosphoserine. Positions 634–653 (QEAENEKDRADQTVLTEDEK) are enriched in basic and acidic residues.

This sequence belongs to the chromogranin/secretogranin protein family. Interacts with ITPR1 in the secretory granules. In terms of processing, extensively processed by limited proteolysis at conserved basic residues. Alternative processing are seen in different tissues. Post-translationally, O-glycosylated. As to expression, detected in cerebrospinal fluid and urine (at protein level). Expressed in the adrenal medulla, and in pheochromocytoma. Not expressed in liver.

Its subcellular location is the secreted. Functionally, secretogranin-1 is a neuroendocrine secretory granule protein, which may be the precursor for other biologically active peptides. The chain is Secretogranin-1 (CHGB) from Homo sapiens (Human).